The sequence spans 108 residues: Cell division topological specificity factor (108 aa).

The protein belongs to the MinE family.

Its function is as follows. Prevents the cell division inhibition by proteins MinC and MinD at internal division sites while permitting inhibition at polar sites. This ensures cell division at the proper site by restricting the formation of a division septum at the midpoint of the long axis of the cell. The polypeptide is Cell division topological specificity factor (Prochlorococcus marinus (strain MIT 9215)).